Here is a 279-residue protein sequence, read N- to C-terminus: Lipid phosphate phosphatase epsilon 1, chloroplastic (279 aa).

A chloroplast-targeting transit peptide spans 1-88 (MAASSSLLLL…SFINNSSEIR (88 aa)). 5 helical membrane passes run 126–142 (LWAVIGSISNSALSVVL), 164–184 (SHAQSISFISVFAVLSVMEWL), 185–205 (GTNGVSLFLSGLILALGSYFI), 219–239 (VVVGAIVGSLFCILWYTMWNS), and 255–275 (VFLFAATFALAFAAYVVLNWF).

It belongs to the PA-phosphatase related phosphoesterase family. In terms of tissue distribution, expressed in root tips, root branch points, cotyledons and leaves.

The protein resides in the plastid. It is found in the chloroplast inner membrane. Inhibited by Mg(2+). Functionally, exhibits phosphatidate phosphatase (PAP) activity in vitro. May play a secondary role as PAP in plastids. This Arabidopsis thaliana (Mouse-ear cress) protein is Lipid phosphate phosphatase epsilon 1, chloroplastic (LPPE1).